Here is a 622-residue protein sequence, read N- to C-terminus: UvrABC system protein C (622 aa).

One can recognise a GIY-YIG domain in the interval 13–92; the sequence is DKPGVYLMKN…IKENRPKYNV (80 aa). In terms of domain architecture, UVR spans 205 to 240; that stretch reads DELIKKIEEKMKRAAEKMDFEGAAHYRDQRQALLDI.

It belongs to the UvrC family. Interacts with UvrB in an incision complex.

It localises to the cytoplasm. In terms of biological role, the UvrABC repair system catalyzes the recognition and processing of DNA lesions. UvrC both incises the 5' and 3' sides of the lesion. The N-terminal half is responsible for the 3' incision and the C-terminal half is responsible for the 5' incision. The polypeptide is UvrABC system protein C (Alkaliphilus metalliredigens (strain QYMF)).